Reading from the N-terminus, the 120-residue chain is uncharacterized protein (120 aa).

Positions 1–19 (MTSFAVVARLITRAPRVRA) are cleaved as a signal peptide. Disordered stretches follow at residues 48–71 (VAKK…DKAK) and 90–120 (DTVT…KNLK). Basic and acidic residues predominate over residues 90–103 (DTVTGKTEETKESI).

This is an uncharacterized protein from Arabidopsis thaliana (Mouse-ear cress).